A 619-amino-acid chain; its full sequence is CLPTM1-like membrane protein cnrB (619 aa).

Residues 1-21 form a disordered region; the sequence is MNNQGGAVAANGQRPQAQQQQ. Positions 9 to 21 are enriched in low complexity; sequence AANGQRPQAQQQQ. 6 helical membrane-spanning segments follow: residues 26-46, 324-344, 360-380, 384-404, 445-465, and 474-496; these read IMGI…ASFA, WILG…FLAF, LSVK…LYLL, TSYM…WKLG, YLSW…LYYH, and VVSS…QLFI. A disordered region spans residues 566–619; it reads SEEAEEVQQQDKKEIKEKVEEREEEKQEEEEEEKEKEEESTSSSKVTKRKTKKV. The segment covering 574–590 has biased composition (basic and acidic residues); the sequence is QQDKKEIKEKVEEREEE. Acidic residues predominate over residues 591–605; sequence KQEEEEEEKEKEEES.

The protein belongs to the CLPTM1 family.

The protein resides in the membrane. The sequence is that of CLPTM1-like membrane protein cnrB (cnrB) from Dictyostelium discoideum (Social amoeba).